The following is a 364-amino-acid chain: Probable UDP-arabinopyranose mutase 4 (364 aa).

The DXD motif signature appears at 106–108 (DDD). Residue Arg154 is glycosylated (N-linked (Glc...) arginine).

This sequence belongs to the RGP family. Heteromers with RGP1 and RGP2. It depends on Mn(2+) as a cofactor. Mg(2+) serves as cofactor. Reversibly glycosylated in vitro by UDP-glucose, UDP-xylose and UDP-galactose, but not UDP-mannose. In terms of tissue distribution, specifically expressed in developing seeds.

The protein localises to the cytoplasm. It localises to the cytosol. Its subcellular location is the golgi apparatus. The enzyme catalyses UDP-beta-L-arabinofuranose = UDP-beta-L-arabinopyranose. Functionally, probable UDP-L-arabinose mutase involved in the biosynthesis of cell wall non-cellulosic polysaccharides. The sequence is that of Probable UDP-arabinopyranose mutase 4 from Arabidopsis thaliana (Mouse-ear cress).